Consider the following 342-residue polypeptide: Holliday junction branch migration complex subunit RuvB (342 aa).

The large ATPase domain (RuvB-L) stretch occupies residues 1 to 184; the sequence is MDNERVITAV…FGIVQRLEFY (184 aa). ATP contacts are provided by residues isoleucine 23, arginine 24, glycine 65, lysine 68, threonine 69, threonine 70, 131–133, arginine 174, tyrosine 184, and arginine 221; that span reads EDY. Residue threonine 69 coordinates Mg(2+). The small ATPAse domain (RuvB-S) stretch occupies residues 185–255; sequence SVDDLSGIVS…IAQRALDMLE (71 aa). A head domain (RuvB-H) region spans residues 258 to 342; that stretch reads SCGLDGTDRR…PRQDGDLFND (85 aa). The DNA site is built by arginine 313 and arginine 318.

Belongs to the RuvB family. In terms of assembly, homohexamer. Forms an RuvA(8)-RuvB(12)-Holliday junction (HJ) complex. HJ DNA is sandwiched between 2 RuvA tetramers; dsDNA enters through RuvA and exits via RuvB. An RuvB hexamer assembles on each DNA strand where it exits the tetramer. Each RuvB hexamer is contacted by two RuvA subunits (via domain III) on 2 adjacent RuvB subunits; this complex drives branch migration. In the full resolvosome a probable DNA-RuvA(4)-RuvB(12)-RuvC(2) complex forms which resolves the HJ.

The protein localises to the cytoplasm. It carries out the reaction ATP + H2O = ADP + phosphate + H(+). Functionally, the RuvA-RuvB-RuvC complex processes Holliday junction (HJ) DNA during genetic recombination and DNA repair, while the RuvA-RuvB complex plays an important role in the rescue of blocked DNA replication forks via replication fork reversal (RFR). RuvA specifically binds to HJ cruciform DNA, conferring on it an open structure. The RuvB hexamer acts as an ATP-dependent pump, pulling dsDNA into and through the RuvAB complex. RuvB forms 2 homohexamers on either side of HJ DNA bound by 1 or 2 RuvA tetramers; 4 subunits per hexamer contact DNA at a time. Coordinated motions by a converter formed by DNA-disengaged RuvB subunits stimulates ATP hydrolysis and nucleotide exchange. Immobilization of the converter enables RuvB to convert the ATP-contained energy into a lever motion, pulling 2 nucleotides of DNA out of the RuvA tetramer per ATP hydrolyzed, thus driving DNA branch migration. The RuvB motors rotate together with the DNA substrate, which together with the progressing nucleotide cycle form the mechanistic basis for DNA recombination by continuous HJ branch migration. Branch migration allows RuvC to scan DNA until it finds its consensus sequence, where it cleaves and resolves cruciform DNA. This Alcanivorax borkumensis (strain ATCC 700651 / DSM 11573 / NCIMB 13689 / SK2) protein is Holliday junction branch migration complex subunit RuvB.